The sequence spans 36 residues: Photosystem I reaction center subunit VIII (36 aa).

The chain crosses the membrane as a helical span at residues 8-28; it reads SVLVPLVGLIFPAMAMASLFL.

This sequence belongs to the PsaI family.

The protein resides in the plastid. The protein localises to the chloroplast thylakoid membrane. Its function is as follows. May help in the organization of the PsaL subunit. This Daucus carota (Wild carrot) protein is Photosystem I reaction center subunit VIII.